The sequence spans 265 residues: Glutamate 5-kinase (265 aa).

Lys-15 is an ATP binding site. Substrate contacts are provided by Ser-55, Asp-142, and Asn-158. ATP is bound by residues 178–179 (SD) and 220–226 (TGGMVTK).

The protein belongs to the glutamate 5-kinase family.

The protein resides in the cytoplasm. The enzyme catalyses L-glutamate + ATP = L-glutamyl 5-phosphate + ADP. The protein operates within amino-acid biosynthesis; L-proline biosynthesis; L-glutamate 5-semialdehyde from L-glutamate: step 1/2. Functionally, catalyzes the transfer of a phosphate group to glutamate to form L-glutamate 5-phosphate. This chain is Glutamate 5-kinase, found in Lactiplantibacillus plantarum (strain ATCC BAA-793 / NCIMB 8826 / WCFS1) (Lactobacillus plantarum).